A 271-amino-acid chain; its full sequence is Diaminopimelate epimerase (271 aa).

Substrate contacts are provided by Asn13, Gln46, and Asn66. Cys75 serves as the catalytic Proton donor. Residues 76–77 (GN), Asn155, Asn188, and 206–207 (ER) contribute to the substrate site. The active-site Proton acceptor is the Cys215. 216–217 (GS) serves as a coordination point for substrate.

Belongs to the diaminopimelate epimerase family. In terms of assembly, homodimer.

It is found in the cytoplasm. It catalyses the reaction (2S,6S)-2,6-diaminopimelate = meso-2,6-diaminopimelate. It participates in amino-acid biosynthesis; L-lysine biosynthesis via DAP pathway; DL-2,6-diaminopimelate from LL-2,6-diaminopimelate: step 1/1. Its function is as follows. Catalyzes the stereoinversion of LL-2,6-diaminopimelate (L,L-DAP) to meso-diaminopimelate (meso-DAP), a precursor of L-lysine and an essential component of the bacterial peptidoglycan. This Vesicomyosocius okutanii subsp. Calyptogena okutanii (strain HA) protein is Diaminopimelate epimerase.